The chain runs to 326 residues: DNA-directed RNA polymerase subunit alpha (326 aa).

Residues 1–231 form an alpha N-terminal domain (alpha-NTD) region; that stretch reads MQTALLKPKI…DQLSVFAALE (231 aa). The tract at residues 247-326 is alpha C-terminal domain (alpha-CTD); it reads IDPILLRPVD…ENWPPAGLEK (80 aa).

This sequence belongs to the RNA polymerase alpha chain family. Homodimer. The RNAP catalytic core consists of 2 alpha, 1 beta, 1 beta' and 1 omega subunit. When a sigma factor is associated with the core the holoenzyme is formed, which can initiate transcription.

It catalyses the reaction RNA(n) + a ribonucleoside 5'-triphosphate = RNA(n+1) + diphosphate. Functionally, DNA-dependent RNA polymerase catalyzes the transcription of DNA into RNA using the four ribonucleoside triphosphates as substrates. This is DNA-directed RNA polymerase subunit alpha from Ralstonia nicotianae (strain ATCC BAA-1114 / GMI1000) (Ralstonia solanacearum).